The primary structure comprises 360 residues: DNA replication and repair protein RecF (360 aa).

30-37 (GHNGSGKT) contributes to the ATP binding site.

Belongs to the RecF family.

Its subcellular location is the cytoplasm. Its function is as follows. The RecF protein is involved in DNA metabolism; it is required for DNA replication and normal SOS inducibility. RecF binds preferentially to single-stranded, linear DNA. It also seems to bind ATP. The polypeptide is DNA replication and repair protein RecF (Haemophilus ducreyi (strain 35000HP / ATCC 700724)).